A 238-amino-acid polypeptide reads, in one-letter code: tRNA (guanine-N(7)-)-methyltransferase (238 aa).

Positions 68, 93, 120, and 143 each coordinate S-adenosyl-L-methionine. Residue D143 is part of the active site. Substrate-binding positions include K147, D179, and 216–219 (TKFE).

This sequence belongs to the class I-like SAM-binding methyltransferase superfamily. TrmB family.

The enzyme catalyses guanosine(46) in tRNA + S-adenosyl-L-methionine = N(7)-methylguanosine(46) in tRNA + S-adenosyl-L-homocysteine. The protein operates within tRNA modification; N(7)-methylguanine-tRNA biosynthesis. Its function is as follows. Catalyzes the formation of N(7)-methylguanine at position 46 (m7G46) in tRNA. The sequence is that of tRNA (guanine-N(7)-)-methyltransferase from Stutzerimonas stutzeri (strain A1501) (Pseudomonas stutzeri).